Here is a 220-residue protein sequence, read N- to C-terminus: Uracil-DNA glycosylase 1 (220 aa).

The active-site Proton acceptor is Asp65.

The protein belongs to the uracil-DNA glycosylase (UDG) superfamily. UNG family.

The protein localises to the cytoplasm. The enzyme catalyses Hydrolyzes single-stranded DNA or mismatched double-stranded DNA and polynucleotides, releasing free uracil.. Its function is as follows. Excises uracil residues from the DNA which can arise as a result of misincorporation of dUMP residues by DNA polymerase or due to deamination of cytosine. This chain is Uracil-DNA glycosylase 1, found in Bacteroides fragilis (strain YCH46).